The primary structure comprises 224 residues: 7-cyano-7-deazaguanine synthase (224 aa).

12 to 22 (LSGGLDSSTVT) is a binding site for ATP. Zn(2+) contacts are provided by Cys193, Cys201, Cys204, and Cys207.

This sequence belongs to the QueC family. The cofactor is Zn(2+).

It carries out the reaction 7-carboxy-7-deazaguanine + NH4(+) + ATP = 7-cyano-7-deazaguanine + ADP + phosphate + H2O + H(+). It participates in purine metabolism; 7-cyano-7-deazaguanine biosynthesis. Functionally, catalyzes the ATP-dependent conversion of 7-carboxy-7-deazaguanine (CDG) to 7-cyano-7-deazaguanine (preQ(0)). In Prochlorococcus marinus (strain MIT 9301), this protein is 7-cyano-7-deazaguanine synthase.